The chain runs to 97 residues: Aspartyl/glutamyl-tRNA(Asn/Gln) amidotransferase subunit C (97 aa).

This sequence belongs to the GatC family. In terms of assembly, heterotrimer of A, B and C subunits.

It carries out the reaction L-glutamyl-tRNA(Gln) + L-glutamine + ATP + H2O = L-glutaminyl-tRNA(Gln) + L-glutamate + ADP + phosphate + H(+). The enzyme catalyses L-aspartyl-tRNA(Asn) + L-glutamine + ATP + H2O = L-asparaginyl-tRNA(Asn) + L-glutamate + ADP + phosphate + 2 H(+). Its function is as follows. Allows the formation of correctly charged Asn-tRNA(Asn) or Gln-tRNA(Gln) through the transamidation of misacylated Asp-tRNA(Asn) or Glu-tRNA(Gln) in organisms which lack either or both of asparaginyl-tRNA or glutaminyl-tRNA synthetases. The reaction takes place in the presence of glutamine and ATP through an activated phospho-Asp-tRNA(Asn) or phospho-Glu-tRNA(Gln). The sequence is that of Aspartyl/glutamyl-tRNA(Asn/Gln) amidotransferase subunit C from Cyanothece sp. (strain PCC 7425 / ATCC 29141).